The chain runs to 420 residues: ATP phosphoribosyltransferase regulatory subunit (420 aa).

Belongs to the class-II aminoacyl-tRNA synthetase family. HisZ subfamily. In terms of assembly, heteromultimer composed of HisG and HisZ subunits.

It localises to the cytoplasm. It functions in the pathway amino-acid biosynthesis; L-histidine biosynthesis; L-histidine from 5-phospho-alpha-D-ribose 1-diphosphate: step 1/9. In terms of biological role, required for the first step of histidine biosynthesis. May allow the feedback regulation of ATP phosphoribosyltransferase activity by histidine. The polypeptide is ATP phosphoribosyltransferase regulatory subunit (Bacillus cereus (strain ATCC 14579 / DSM 31 / CCUG 7414 / JCM 2152 / NBRC 15305 / NCIMB 9373 / NCTC 2599 / NRRL B-3711)).